The sequence spans 677 residues: Threonine--tRNA ligase (677 aa).

Residues 1 to 59 (MAQATISITVNGEAKEVEATTTGVELFAEDKNIIAVKINGENRDLYTPLNDGDTVDPIA) enclose the TGS domain. The segment at 255–561 (DHRKLGAEMD…LLEHYAGAFP (307 aa)) is catalytic. Positions 360, 411, and 538 each coordinate Zn(2+).

Belongs to the class-II aminoacyl-tRNA synthetase family. Homodimer. Zn(2+) is required as a cofactor.

It localises to the cytoplasm. The catalysed reaction is tRNA(Thr) + L-threonine + ATP = L-threonyl-tRNA(Thr) + AMP + diphosphate + H(+). Functionally, catalyzes the attachment of threonine to tRNA(Thr) in a two-step reaction: L-threonine is first activated by ATP to form Thr-AMP and then transferred to the acceptor end of tRNA(Thr). Also edits incorrectly charged L-seryl-tRNA(Thr). The chain is Threonine--tRNA ligase from Bifidobacterium longum (strain NCC 2705).